Reading from the N-terminus, the 336-residue chain is Fructose-1,6-bisphosphatase class 1 (336 aa).

Residues Glu-90, Asp-112, Leu-114, and Asp-115 each contribute to the Mg(2+) site. Substrate is bound by residues 115–118 (DGSS), Asn-211, and Lys-277. Residue Glu-283 participates in Mg(2+) binding.

It belongs to the FBPase class 1 family. In terms of assembly, homotetramer. It depends on Mg(2+) as a cofactor.

It is found in the cytoplasm. It catalyses the reaction beta-D-fructose 1,6-bisphosphate + H2O = beta-D-fructose 6-phosphate + phosphate. The protein operates within carbohydrate biosynthesis; gluconeogenesis. The polypeptide is Fructose-1,6-bisphosphatase class 1 (Pseudomonas entomophila (strain L48)).